The sequence spans 589 residues: (E)-beta-ocimene synthase, chloroplastic (589 aa).

The N-terminal 25 residues, 1 to 25, are a transit peptide targeting the chloroplast; that stretch reads MAAHNLCFNSAFVCNVHHQKTQHFP. (2E,6E)-farnesyl diphosphate is bound by residues Arg-302, Asp-339, Asp-343, Arg-480, and Asn-483. Residues Asp-339 and Asp-343 each coordinate Mg(2+). The short motif at 339 to 343 is the DDXXD motif element; that stretch reads DDIYD. Asn-483, Thr-487, and Glu-491 together coordinate Mg(2+).

This sequence belongs to the terpene synthase family. Tpsb subfamily. The cofactor is Mg(2+). Mn(2+) serves as cofactor. In terms of tissue distribution, expressed exclusively in flowers.

Its subcellular location is the plastid. It is found in the chloroplast. It catalyses the reaction (2E,6E)-farnesyl diphosphate = (3E,6E)-alpha-farnesene + diphosphate. It functions in the pathway secondary metabolite biosynthesis; terpenoid biosynthesis. Predominantly involved in monoterpene (C10) biosynthesis. Using GPP as substrate, the major product is (E)-beta-ocimene with minor amounts of (Z)-beta-ocimene and myrcene. Using FPP as substrate, could also be able to synthesize in vitro sesquiterpenes (C15) with (E,E)-alpha-farnesene as the major product and with (Z,E)-alpha-farnesene and (E,E)-beta-farnesene as minor products. The protein is (E)-beta-ocimene synthase, chloroplastic (TPS02) of Arabidopsis thaliana (Mouse-ear cress).